A 121-amino-acid polypeptide reads, in one-letter code: Large ribosomal subunit protein bL20 (121 aa).

The protein belongs to the bacterial ribosomal protein bL20 family.

Functionally, binds directly to 23S ribosomal RNA and is necessary for the in vitro assembly process of the 50S ribosomal subunit. It is not involved in the protein synthesizing functions of that subunit. In Methylorubrum populi (strain ATCC BAA-705 / NCIMB 13946 / BJ001) (Methylobacterium populi), this protein is Large ribosomal subunit protein bL20.